A 326-amino-acid polypeptide reads, in one-letter code: Toluene-4-monooxygenase system, ferredoxin--NAD(+) reductase component (326 aa).

In terms of domain architecture, 2Fe-2S ferredoxin-type spans 1–92 (MFNIQSDDLL…DLKIKVINRA (92 aa)). [2Fe-2S] cluster contacts are provided by C36, C41, C44, and C76. The segment at 95 to 326 (RASHPPKRFS…FEAIHFDRFF (232 aa)) is ferredoxin-reductase. The 96-residue stretch at 100 to 195 (PKRFSTRVVS…DGPYGLSVLK (96 aa)) folds into the FAD-binding FR-type domain. Residues 146–149 (RAYS), 162–164 (IVK), and 170–172 (KVS) contribute to the FAD site.

The protein belongs to the bacterial ring-hydroxylating dioxygenase ferredoxin reductase family. Monomer. The alkene monooxygenase multicomponent enzyme system is composed of an electron transfer component and a monooxygenase component interacting with the effector protein TmoD. The electron transfer component is composed of a ferredoxin reductase (TmoF) and a ferredoxin (TmoC), and the monooxygenase component is formed by a heterohexamer (dimer of heterotrimers) of two alpha subunits (TmoA), two beta subunits (TmoE) and two gamma subunits (TmoB). Requires FAD as cofactor. [2Fe-2S] cluster serves as cofactor.

The enzyme catalyses 2 reduced [2Fe-2S]-[ferredoxin] + NAD(+) + H(+) = 2 oxidized [2Fe-2S]-[ferredoxin] + NADH. Its pathway is xenobiotic degradation; toluene degradation. Functionally, reductase component of the toluene-4-monooxygenase multicomponent enzyme system which catalyzes the O2- and NADH-dependent hydroxylation of toluene to form p-cresol. Ferredoxin reductase catalyzes the transfer of electrons from NADH to ferredoxin (TmoC). This is Toluene-4-monooxygenase system, ferredoxin--NAD(+) reductase component from Ectopseudomonas mendocina (Pseudomonas mendocina).